A 328-amino-acid chain; its full sequence is P2Y purinoceptor 6 (328 aa).

Residues 1-27 (MEQDNGTIQAPGLPPTTCVYREDFKRL) lie on the Extracellular side of the membrane. N-linked (GlcNAc...) asparagine glycosylation occurs at Asn-5. The chain crosses the membrane as a helical span at residues 28–48 (LLTPVYSVVLVVGLPLNICVI). Residues 49–62 (AQICASRRTLTRSA) are Cytoplasmic-facing. A helical membrane pass occupies residues 63–83 (VYTLNLALADLMYACSLPLLI). Over 84–101 (YNYARGDHWPFGDLACRF) the chain is Extracellular. Cys-99 and Cys-177 are oxidised to a cystine. The helical transmembrane segment at 102 to 122 (VRFLFYANLHGSILFLTCISF) threads the bilayer. Residues 123–144 (QRYLGICHPLASWHKRGGRRAA) lie on the Cytoplasmic side of the membrane. The helical transmembrane segment at 145–165 (WVVCGVVWLAVTAQCLPTAVF) threads the bilayer. At 166-194 (AATGIQRNRTVCYDLSPPILSTRYLPYGM) the chain is on the extracellular side. Asn-173 carries an N-linked (GlcNAc...) asparagine glycan. Residues 195–215 (ALTVIGFLLPFIALLACYCRM) form a helical membrane-spanning segment. At 216 to 236 (ARRLCRQDGPAGPVAQERRSK) the chain is on the cytoplasmic side. A helical membrane pass occupies residues 237–257 (AARMAVVVAAVFAISFLPFHI). Residues 258–280 (TKTAYLAVRSTPGVSCPVLETFA) lie on the Extracellular side of the membrane. A helical membrane pass occupies residues 281-303 (AAYKGTRPFASVNSVLDPILFYF). Topologically, residues 304–328 (TQQKFRRQPHDLLQRLTAKWQRQRV) are cytoplasmic.

It belongs to the G-protein coupled receptor 1 family.

It is found in the cell membrane. In terms of biological role, receptor for extracellular UTP &gt; ADP = 2-methylthio-ATP &gt; ADP-beta-S &gt; ATP = ATP-gamma-S. The activity of this receptor is mediated by G proteins which activate a phosphatidylinositol-calcium second messenger system. Functionally coupled to phospholipase C. This chain is P2Y purinoceptor 6 (P2ry6), found in Mus musculus (Mouse).